Reading from the N-terminus, the 454-residue chain is tRNA modification GTPase MnmE (454 aa).

Residues Arg23, Glu80, and Lys120 each coordinate (6S)-5-formyl-5,6,7,8-tetrahydrofolate. One can recognise a TrmE-type G domain in the interval 216–377; that stretch reads GMKVVIAGRP…LRNHLKQSMG (162 aa). Asn226 is a K(+) binding site. Residues 226–231, 245–251, 270–273, and 335–338 contribute to the GTP site; these read NAGKSS, TDIAGTT, DTAG, and NKAD. Ser230 is a binding site for Mg(2+). 3 residues coordinate K(+): Thr245, Ile247, and Thr250. Thr251 lines the Mg(2+) pocket. Position 454 (Lys454) interacts with (6S)-5-formyl-5,6,7,8-tetrahydrofolate.

The protein belongs to the TRAFAC class TrmE-Era-EngA-EngB-Septin-like GTPase superfamily. TrmE GTPase family. Homodimer. Heterotetramer of two MnmE and two MnmG subunits. K(+) serves as cofactor.

Its subcellular location is the cytoplasm. Its function is as follows. Exhibits a very high intrinsic GTPase hydrolysis rate. Involved in the addition of a carboxymethylaminomethyl (cmnm) group at the wobble position (U34) of certain tRNAs, forming tRNA-cmnm(5)s(2)U34. In Escherichia coli O157:H7, this protein is tRNA modification GTPase MnmE.